The sequence spans 314 residues: Small ribosomal subunit biogenesis GTPase RsgA (314 aa).

The interval 1–20 (MKRAPTKQPAKPAARGGERA) is disordered. The region spanning 85–246 (SDQFKSKLFA…LIDSPGFQEF (162 aa)) is the CP-type G domain. Residues 134–137 (NKID) and 188–196 (GQSGMGKST) each bind GTP. 4 residues coordinate Zn(2+): Cys-270, Cys-275, His-277, and Cys-283.

This sequence belongs to the TRAFAC class YlqF/YawG GTPase family. RsgA subfamily. In terms of assembly, monomer. Associates with 30S ribosomal subunit, binds 16S rRNA. The cofactor is Zn(2+).

The protein localises to the cytoplasm. Its function is as follows. One of several proteins that assist in the late maturation steps of the functional core of the 30S ribosomal subunit. Helps release RbfA from mature subunits. May play a role in the assembly of ribosomal proteins into the subunit. Circularly permuted GTPase that catalyzes slow GTP hydrolysis, GTPase activity is stimulated by the 30S ribosomal subunit. This chain is Small ribosomal subunit biogenesis GTPase RsgA, found in Burkholderia pseudomallei (strain K96243).